The primary structure comprises 187 residues: MSGGVKLIAGLGNPGDQYARTRHNVGAWFLETLAQQRNQSLAKENKFHGFVAKCNDYWLLKPTTFMNESGQAVAALARFYKIKPSEILIAHDELDFPAGDIRLKEGGGHGGHNGLRNIIQHLGSSDFYRLRIGINHPGYKDRVTPYVLSPPSENDRIAILAAIEKGLRLIPELVQGDFQKVMRELHS.

TRNA is bound at residue tyrosine 18. Histidine 23 functions as the Proton acceptor in the catalytic mechanism. Residues phenylalanine 65, asparagine 67, and asparagine 113 each coordinate tRNA.

Belongs to the PTH family. As to quaternary structure, monomer.

The protein resides in the cytoplasm. It carries out the reaction an N-acyl-L-alpha-aminoacyl-tRNA + H2O = an N-acyl-L-amino acid + a tRNA + H(+). Its function is as follows. Hydrolyzes ribosome-free peptidyl-tRNAs (with 1 or more amino acids incorporated), which drop off the ribosome during protein synthesis, or as a result of ribosome stalling. In terms of biological role, catalyzes the release of premature peptidyl moieties from peptidyl-tRNA molecules trapped in stalled 50S ribosomal subunits, and thus maintains levels of free tRNAs and 50S ribosomes. The chain is Peptidyl-tRNA hydrolase from Coxiella burnetii (strain CbuK_Q154) (Coxiella burnetii (strain Q154)).